A 614-amino-acid chain; its full sequence is Dihydroxy-acid dehydratase (614 aa).

Aspartate 81 is a Mg(2+) binding site. A [2Fe-2S] cluster-binding site is contributed by cysteine 122. Mg(2+) contacts are provided by aspartate 123 and lysine 124. Lysine 124 bears the N6-carboxylysine mark. [2Fe-2S] cluster is bound at residue cysteine 195. Residue glutamate 491 coordinates Mg(2+). Serine 517 (proton acceptor) is an active-site residue.

The protein belongs to the IlvD/Edd family. Homodimer. [2Fe-2S] cluster serves as cofactor. The cofactor is Mg(2+).

The enzyme catalyses (2R)-2,3-dihydroxy-3-methylbutanoate = 3-methyl-2-oxobutanoate + H2O. It catalyses the reaction (2R,3R)-2,3-dihydroxy-3-methylpentanoate = (S)-3-methyl-2-oxopentanoate + H2O. It functions in the pathway amino-acid biosynthesis; L-isoleucine biosynthesis; L-isoleucine from 2-oxobutanoate: step 3/4. The protein operates within amino-acid biosynthesis; L-valine biosynthesis; L-valine from pyruvate: step 3/4. Its function is as follows. Functions in the biosynthesis of branched-chain amino acids. Catalyzes the dehydration of (2R,3R)-2,3-dihydroxy-3-methylpentanoate (2,3-dihydroxy-3-methylvalerate) into 2-oxo-3-methylpentanoate (2-oxo-3-methylvalerate) and of (2R)-2,3-dihydroxy-3-methylbutanoate (2,3-dihydroxyisovalerate) into 2-oxo-3-methylbutanoate (2-oxoisovalerate), the penultimate precursor to L-isoleucine and L-valine, respectively. This Actinobacillus succinogenes (strain ATCC 55618 / DSM 22257 / CCUG 43843 / 130Z) protein is Dihydroxy-acid dehydratase.